A 76-amino-acid polypeptide reads, in one-letter code: Small ribosomal subunit protein bS21A (76 aa).

Basic and acidic residues predominate over residues 35–52; sequence HYEKPSEKRAREKAEAVR. Residues 35–76 form a disordered region; the sequence is HYEKPSEKRAREKAEAVRRARKLARKRAQREGLVSGRPAAAR. Basic residues predominate over residues 53-62; that stretch reads RARKLARKRA.

Belongs to the bacterial ribosomal protein bS21 family.

The chain is Small ribosomal subunit protein bS21A from Chelativorans sp. (strain BNC1).